The sequence spans 147 residues: uncharacterized protein (147 aa).

This is an uncharacterized protein from Aedes vexans (Inland floodwater mosquito).